We begin with the raw amino-acid sequence, 237 residues long: Riboflavin kinase (237 aa).

Positions Met1–Val101 are unknown. Residues Leu102–Lys237 are riboflavin kinase. Gly111–Gln116 provides a ligand contact to CDP. Positions 140 and 142 each coordinate Mg(2+). The FMN site is built by Thr197 and Glu205. Residue Val210–Arg213 participates in CDP binding.

The protein belongs to the archaeal riboflavin kinase family. The cofactor is Mg(2+).

It carries out the reaction riboflavin + CTP = CDP + FMN + H(+). Its pathway is cofactor biosynthesis; FMN biosynthesis; FMN from riboflavin (CTP route): step 1/1. In terms of biological role, catalyzes the CTP-dependent phosphorylation of riboflavin (vitamin B2) to form flavin mononucleotide (FMN). The protein is Riboflavin kinase (ribK) of Methanosarcina acetivorans (strain ATCC 35395 / DSM 2834 / JCM 12185 / C2A).